A 357-amino-acid polypeptide reads, in one-letter code: Cinnamyl alcohol dehydrogenase 1 (357 aa).

Positions Gly-20–Val-348 constitute an Enoyl reductase (ER) domain. Cys-47 serves as a coordination point for Zn(2+). Ser-49 contacts NADP(+). Residues His-69, Glu-70, Cys-100, Cys-103, Cys-106, Cys-114, and Cys-163 each contribute to the Zn(2+) site. NADP(+) contacts are provided by residues Thr-167, Gly-188–Gly-193, Ser-211–Lys-216, Thr-251, Gly-275, and Ser-298–Ile-300.

This sequence belongs to the zinc-containing alcohol dehydrogenase family. As to quaternary structure, homodimer. Requires Zn(2+) as cofactor. As to expression, accumulates mainly in the placenta of red fruits, and, to a lower extent, in green fruits placenta, pericarp and seeds.

It is found in the cytoplasm. It carries out the reaction (E)-cinnamyl alcohol + NADP(+) = (E)-cinnamaldehyde + NADPH + H(+). The catalysed reaction is (E)-coniferol + NADP(+) = (E)-coniferaldehyde + NADPH + H(+). The enzyme catalyses (E)-sinapyl alcohol + NADP(+) = (E)-sinapaldehyde + NADPH + H(+). It catalyses the reaction (E)-4-coumaroyl alcohol + NADP(+) = (E)-4-coumaraldehyde + NADPH + H(+). It carries out the reaction (E)-caffeyl alcohol + NADP(+) = (E)-caffeyl aldehyde + NADPH + H(+). The catalysed reaction is vanillin + NADPH + H(+) = 4-hydroxy-3-methoxy-benzenemethanol + NADP(+). It participates in aromatic compound metabolism; phenylpropanoid biosynthesis. With respect to regulation, inhibited, in a concentration-dependent manner, by N-(O-hydroxyphenyl) sulfinamoyltertiobutyl acetate (OHPAS), a specific cinnamyl alcohol dehydrogenase (CAD) inhibitor, as well as by ethylenediaminetetraacetic acid (EDTA), a metalloenzyme inhibitor. Involved in the biosynthesis of capsinoids natural products (e.g. capsiate), non-pungent alkaloids synthesized from phenylpropanoid intermediates in the placental tissue of sweet chili pepper fruit acting as repellant on herbivorous mammals. Catalyzes the reduction of vanillin to generate vanillyl alcohol, a precursor of capsiate, a non-pungent component that accumulates mainly in the placenta of mature red fruits, but also in green fruits to lower levels. Involved in lignin biosynthesis. Catalyzes the final step specific for the production of lignin monomers. Mediates the conversion of cinnamaldehyde and coniferaldehyde to cinnamyl alcohol and coniferyl alcohol, respectively. Catalyzes the NADPH-dependent reduction of 5-hydroxyconiferaldehyde, sinapaldehyde, 4-coumaraldehyde and caffeyl aldehyde to their respective alcohols. In Capsicum annuum (Capsicum pepper), this protein is Cinnamyl alcohol dehydrogenase 1.